The sequence spans 224 residues: ATP-dependent Clp protease proteolytic subunit 1 (224 aa).

Residue Ser120 is the Nucleophile of the active site. Residue His145 is part of the active site.

Belongs to the peptidase S14 family. Fourteen ClpP subunits assemble into 2 heptameric rings which stack back to back to give a disk-like structure with a central cavity, resembling the structure of eukaryotic proteasomes.

It is found in the cytoplasm. The catalysed reaction is Hydrolysis of proteins to small peptides in the presence of ATP and magnesium. alpha-casein is the usual test substrate. In the absence of ATP, only oligopeptides shorter than five residues are hydrolyzed (such as succinyl-Leu-Tyr-|-NHMec, and Leu-Tyr-Leu-|-Tyr-Trp, in which cleavage of the -Tyr-|-Leu- and -Tyr-|-Trp bonds also occurs).. Cleaves peptides in various proteins in a process that requires ATP hydrolysis. Has a chymotrypsin-like activity. Plays a major role in the degradation of misfolded proteins. This is ATP-dependent Clp protease proteolytic subunit 1 from Prochlorococcus marinus (strain MIT 9313).